We begin with the raw amino-acid sequence, 717 residues long: Delta-1-pyrroline-5-carboxylate synthase (717 aa).

Residues 1–296 (MDAVDSTRAF…WAPVGDVGAR (296 aa)) form a glutamate 5-kinase region. Substrate-binding residues include Ser-60, Asp-157, and Asn-176. ATP-binding positions include 196–197 (SD) and 236–242 (RGGMTAK). Residues 297–717 (DMAVAARESS…YTHKDLTSHA (421 aa)) form a gamma-glutamyl phosphate reductase region.

The protein in the N-terminal section; belongs to the glutamate 5-kinase family. In the C-terminal section; belongs to the gamma-glutamyl phosphate reductase family. In terms of tissue distribution, expressed at high levels in leaves and is inducible in roots subjected to salt stress.

The enzyme catalyses L-glutamate + ATP = L-glutamyl 5-phosphate + ADP. It catalyses the reaction L-glutamate 5-semialdehyde + phosphate + NADP(+) = L-glutamyl 5-phosphate + NADPH + H(+). It participates in amino-acid biosynthesis; L-proline biosynthesis; L-glutamate 5-semialdehyde from L-glutamate: step 1/2. It functions in the pathway amino-acid biosynthesis; L-proline biosynthesis; L-glutamate 5-semialdehyde from L-glutamate: step 2/2. With respect to regulation, feedback regulated by proline. Functionally, P5CS plays a key role in proline biosynthesis, leading to osmoregulation in plants. This chain is Delta-1-pyrroline-5-carboxylate synthase, found in Actinidia deliciosa (Kiwi).